The following is a 452-amino-acid chain: Phosphoglucosamine mutase (452 aa).

Serine 112 acts as the Phosphoserine intermediate in catalysis. 4 residues coordinate Mg(2+): serine 112, aspartate 251, aspartate 253, and aspartate 255. Serine 112 carries the phosphoserine modification.

This sequence belongs to the phosphohexose mutase family. Mg(2+) is required as a cofactor. In terms of processing, activated by phosphorylation.

It catalyses the reaction alpha-D-glucosamine 1-phosphate = D-glucosamine 6-phosphate. Functionally, catalyzes the conversion of glucosamine-6-phosphate to glucosamine-1-phosphate. The chain is Phosphoglucosamine mutase from Bordetella pertussis (strain Tohama I / ATCC BAA-589 / NCTC 13251).